The primary structure comprises 130 residues: Fluoride-specific ion channel FluC (130 aa).

The next 4 membrane-spanning stretches (helical) occupy residues 3-23 (FVFLWAALGGAIGSSLRYFVG), 38-58 (LGTFSVNIIGCFVIGFMGHLA), 67-87 (FGIFFVTGVLGGFTTFSSYGL), and 102-122 (ISYVLGTNLLGLIGVAIGWFL). Residues Gly77 and Thr80 each coordinate Na(+).

This sequence belongs to the fluoride channel Fluc/FEX (TC 1.A.43) family.

It localises to the cell inner membrane. The enzyme catalyses fluoride(in) = fluoride(out). Na(+) is not transported, but it plays an essential structural role and its presence is essential for fluoride channel function. In terms of biological role, fluoride-specific ion channel. Important for reducing fluoride concentration in the cell, thus reducing its toxicity. The protein is Fluoride-specific ion channel FluC of Helicobacter pylori (strain G27).